Reading from the N-terminus, the 389-residue chain is DEAD-box ATP-dependent RNA helicase CshC (389 aa).

The Q motif signature appears at 1 to 26 (MIKDMQPFLQQAWEKAGFKELTEIQK). A Helicase ATP-binding domain is found at 29–199 (IPTILEGQDV…RDLAVEPQLV (171 aa)). 42–49 (SPTGTGKT) contacts ATP. Positions 147–150 (DEFD) match the DEAD box motif. The 171-residue stretch at 209–379 (LVEHTYIICE…TKPKAPKKKK (171 aa)) folds into the Helicase C-terminal domain. Positions 368–389 (VETKPKAPKKKKPAFTGKKKPR) are disordered. Basic residues predominate over residues 373 to 389 (KAPKKKKPAFTGKKKPR).

It carries out the reaction ATP + H2O = ADP + phosphate + H(+). Its function is as follows. DEAD-box RNA helicase. Probably has an RNA-dependent ATPase activity and a 3' to 5' RNA helicase activity that uses the energy of ATP hydrolysis to destabilize and unwind short RNA duplexes. The protein is DEAD-box ATP-dependent RNA helicase CshC (cshC) of Bacillus cereus (strain ATCC 14579 / DSM 31 / CCUG 7414 / JCM 2152 / NBRC 15305 / NCIMB 9373 / NCTC 2599 / NRRL B-3711).